The following is a 151-amino-acid chain: MNPLRKKRLVIILAILVGVGAAVGLALSALQQNINLFYTPTQIANGEAPKDTRIRAGGMVEKGSLVRSGDSLDAKFNVTDFNKTVTITYRGILPDLFREGQGIVALGKLNADDVVVADEVLAKHDEKYMPPEVAKALKDSGQSAPAPGKEG.

Residues 1–8 (MNPLRKKR) are Cytoplasmic-facing. Residues 9 to 29 (LVIILAILVGVGAAVGLALSA) traverse the membrane as a helical; Signal-anchor for type II membrane protein segment. Residues 30 to 151 (LQQNINLFYT…QSAPAPGKEG (122 aa)) are Periplasmic-facing. H124 and Y128 together coordinate heme.

This sequence belongs to the CcmE/CycJ family.

Its subcellular location is the cell inner membrane. Functionally, heme chaperone required for the biogenesis of c-type cytochromes. Transiently binds heme delivered by CcmC and transfers the heme to apo-cytochromes in a process facilitated by CcmF and CcmH. The sequence is that of Cytochrome c-type biogenesis protein CcmE 2 from Pseudomonas fluorescens (strain Pf0-1).